A 127-amino-acid polypeptide reads, in one-letter code: Small ribosomal subunit protein uS13 (127 aa).

It belongs to the universal ribosomal protein uS13 family. In terms of assembly, part of the 30S ribosomal subunit. Forms a loose heterodimer with protein S19. Forms two bridges to the 50S subunit in the 70S ribosome.

Located at the top of the head of the 30S subunit, it contacts several helices of the 16S rRNA. In the 70S ribosome it contacts the 23S rRNA (bridge B1a) and protein L5 of the 50S subunit (bridge B1b), connecting the 2 subunits; these bridges are implicated in subunit movement. Contacts the tRNAs in the A and P-sites. In Pelagibacter ubique (strain HTCC1062), this protein is Small ribosomal subunit protein uS13.